The sequence spans 701 residues: Elongation factor G 1 (701 aa).

The 283-residue stretch at 8 to 290 folds into the tr-type G domain; that stretch reads ERYRNIGISA…AVIDYLPSPL (283 aa). GTP contacts are provided by residues 17–24, 88–92, and 142–145; these read AHIDAGKT, DTPGH, and NKMD.

The protein belongs to the TRAFAC class translation factor GTPase superfamily. Classic translation factor GTPase family. EF-G/EF-2 subfamily.

It localises to the cytoplasm. Functionally, catalyzes the GTP-dependent ribosomal translocation step during translation elongation. During this step, the ribosome changes from the pre-translocational (PRE) to the post-translocational (POST) state as the newly formed A-site-bound peptidyl-tRNA and P-site-bound deacylated tRNA move to the P and E sites, respectively. Catalyzes the coordinated movement of the two tRNA molecules, the mRNA and conformational changes in the ribosome. The polypeptide is Elongation factor G 1 (Paraburkholderia xenovorans (strain LB400)).